Reading from the N-terminus, the 887-residue chain is Alanine--tRNA ligase (887 aa).

Histidine 575, histidine 579, cysteine 677, and histidine 681 together coordinate Zn(2+).

The protein belongs to the class-II aminoacyl-tRNA synthetase family. Zn(2+) serves as cofactor.

The protein localises to the cytoplasm. The enzyme catalyses tRNA(Ala) + L-alanine + ATP = L-alanyl-tRNA(Ala) + AMP + diphosphate. Catalyzes the attachment of alanine to tRNA(Ala) in a two-step reaction: alanine is first activated by ATP to form Ala-AMP and then transferred to the acceptor end of tRNA(Ala). Also edits incorrectly charged Ser-tRNA(Ala) and Gly-tRNA(Ala) via its editing domain. This is Alanine--tRNA ligase from Geobacillus kaustophilus (strain HTA426).